A 150-amino-acid polypeptide reads, in one-letter code: Large ribosomal subunit protein uL15 (150 aa).

Residues 1–52 form a disordered region; sequence MITLNTLKDSTRKRKPRKRVGRGIGSKHGKTCGRGEKGAGARSGYKRRLGKE. Residues 11–31 show a composition bias toward basic residues; that stretch reads TRKRKPRKRVGRGIGSKHGKT.

Belongs to the universal ribosomal protein uL15 family. In terms of assembly, part of the 50S ribosomal subunit.

Binds to the 23S rRNA. This Protochlamydia amoebophila (strain UWE25) protein is Large ribosomal subunit protein uL15.